A 265-amino-acid polypeptide reads, in one-letter code: MAERSAPVGVMDSGVGGLSVLAEIQRLLPNETLLYVADCGHVPYGEKSPDYIRQRCRHIAGFFHEQGAKAMVLACNTATVAAVADLRELYPTWPLVGMEPAVKPAAAATRSGVVGVLATTGTLQSAKFAALLDRFANDVQVITQPCPGLVELIETGDLTSPVLRQMLWGYVQPLLAAGCDTLILGCTHYPFLRPLLAGMVPADVAVIDTGAAVARQLQRLLGANDLLAEGPAGDARFWTSADPEILRKILPVLWHKCGDVQSFAL.

Substrate is bound by residues 12 to 13 (DS) and 44 to 45 (YG). Cys-75 (proton donor/acceptor) is an active-site residue. Position 76–77 (76–77 (NT)) interacts with substrate. Cys-186 functions as the Proton donor/acceptor in the catalytic mechanism. Residue 187–188 (TH) coordinates substrate.

Belongs to the aspartate/glutamate racemases family.

It catalyses the reaction L-glutamate = D-glutamate. Its pathway is cell wall biogenesis; peptidoglycan biosynthesis. Provides the (R)-glutamate required for cell wall biosynthesis. The chain is Glutamate racemase from Pseudomonas putida (strain GB-1).